The primary structure comprises 89 residues: Venom peptide BmKAPI (89 aa).

The signal sequence occupies residues 1-22 (MKFVFASFALFVIFLCFSQSLS). Disulfide bonds link Cys-28/Cys-66, Cys-37/Cys-62, Cys-41/Cys-55, Cys-46/Cys-86, and Cys-68/Cys-80. One can recognise a TIL domain in the interval 28–86 (CRDNEVFDNCISNCGPPRCSNILNTYPCTNLGPLCTPGCKCKDGRVYDNQGRCVLQTEC).

The protein belongs to the serine protease inhibitor-like (TIL domain-containing) family. Expressed by the venom gland.

The protein localises to the secreted. In terms of biological role, serine protease inhibitor. The chain is Venom peptide BmKAPI from Olivierus martensii (Manchurian scorpion).